The sequence spans 954 residues: Regulatory protein FlaEY (954 aa).

Functionally, functions in trans to modulate the level of transcription of the flagellin genes and several genes encoding chemotaxis functions. It is itself temporally controlled. This is Regulatory protein FlaEY (flaEY) from Caulobacter vibrioides (strain ATCC 19089 / CIP 103742 / CB 15) (Caulobacter crescentus).